Consider the following 364-residue polypeptide: tRNA 2-selenouridine synthase (364 aa).

The Rhodanese domain maps to 14–137 (LIADTPIIDV…LRQTAIQATI (124 aa)). Residue Cys97 is the S-selanylcysteine intermediate of the active site.

It belongs to the SelU family. As to quaternary structure, monomer.

It carries out the reaction 5-methylaminomethyl-2-thiouridine(34) in tRNA + selenophosphate + (2E)-geranyl diphosphate + H2O + H(+) = 5-methylaminomethyl-2-selenouridine(34) in tRNA + (2E)-thiogeraniol + phosphate + diphosphate. The enzyme catalyses 5-methylaminomethyl-2-thiouridine(34) in tRNA + (2E)-geranyl diphosphate = 5-methylaminomethyl-S-(2E)-geranyl-thiouridine(34) in tRNA + diphosphate. It catalyses the reaction 5-methylaminomethyl-S-(2E)-geranyl-thiouridine(34) in tRNA + selenophosphate + H(+) = 5-methylaminomethyl-2-(Se-phospho)selenouridine(34) in tRNA + (2E)-thiogeraniol. The catalysed reaction is 5-methylaminomethyl-2-(Se-phospho)selenouridine(34) in tRNA + H2O = 5-methylaminomethyl-2-selenouridine(34) in tRNA + phosphate. Involved in the post-transcriptional modification of the uridine at the wobble position (U34) of tRNA(Lys), tRNA(Glu) and tRNA(Gln). Catalyzes the conversion of 2-thiouridine (S2U-RNA) to 2-selenouridine (Se2U-RNA). Acts in a two-step process involving geranylation of 2-thiouridine (S2U) to S-geranyl-2-thiouridine (geS2U) and subsequent selenation of the latter derivative to 2-selenouridine (Se2U) in the tRNA chain. The polypeptide is tRNA 2-selenouridine synthase (Escherichia coli (strain SMS-3-5 / SECEC)).